Reading from the N-terminus, the 482-residue chain is MKFIIKLFPEITIKSQSVRLRFIKILTGNIRNVLKHYDETLAVVRHWDNIEVRAKDENQRLAIRDALTRIPGIHHILEVEDVPFTDMHDIFEKALAQYREQLEGKTFCVRVKRRGKHEFSSIEVERYVGGGLNQHIESARVKLTNPDVTVHLEVEDDRLLLIKGRYEGIGGFPIGTQEDVLSLISGGFDSGVSSYMLMRRGCRVHYCFFNLGGAAHEIGVRQVAHYLWNRFGSSHRVRFVAINFEPVVGEILEKVDDGQMGVVLKRMMVRAASKVAERYGVQALVTGEALGQVSSQTLTNLRLIDNVSDTLILRPLISYDKEHIINLARQIGTEDFARTMPEYCGVISKSPTVKAIKAKIEAEEENFDFSILDKVVEEANNVDMREIAQQTQQEVVEVETVSGFGANDVILDIRSVDEQDDKPLKVEGVDVVSLPFYKLSTKFGDLDQSKTWLLWCERGVMSRLQALYLREQGFANVKVYRP.

Positions 61-165 (LAIRDALTRI…DDRLLLIKGR (105 aa)) constitute a THUMP domain. ATP contacts are provided by residues 183–184 (LI), lysine 265, glycine 287, and glutamine 296. The cysteines at positions 344 and 456 are disulfide-linked. Residues 404 to 482 (FGANDVILDI…GFANVKVYRP (79 aa)) form the Rhodanese domain. Residue cysteine 456 is the Cysteine persulfide intermediate of the active site.

It belongs to the ThiI family.

It localises to the cytoplasm. It carries out the reaction [ThiI sulfur-carrier protein]-S-sulfanyl-L-cysteine + a uridine in tRNA + 2 reduced [2Fe-2S]-[ferredoxin] + ATP + H(+) = [ThiI sulfur-carrier protein]-L-cysteine + a 4-thiouridine in tRNA + 2 oxidized [2Fe-2S]-[ferredoxin] + AMP + diphosphate. The enzyme catalyses [ThiS sulfur-carrier protein]-C-terminal Gly-Gly-AMP + S-sulfanyl-L-cysteinyl-[cysteine desulfurase] + AH2 = [ThiS sulfur-carrier protein]-C-terminal-Gly-aminoethanethioate + L-cysteinyl-[cysteine desulfurase] + A + AMP + 2 H(+). Its pathway is cofactor biosynthesis; thiamine diphosphate biosynthesis. Functionally, catalyzes the ATP-dependent transfer of a sulfur to tRNA to produce 4-thiouridine in position 8 of tRNAs, which functions as a near-UV photosensor. Also catalyzes the transfer of sulfur to the sulfur carrier protein ThiS, forming ThiS-thiocarboxylate. This is a step in the synthesis of thiazole, in the thiamine biosynthesis pathway. The sulfur is donated as persulfide by IscS. This chain is tRNA sulfurtransferase, found in Salmonella paratyphi B (strain ATCC BAA-1250 / SPB7).